Consider the following 176-residue polypeptide: Large ribosomal subunit protein uL6 (176 aa).

The protein belongs to the universal ribosomal protein uL6 family. As to quaternary structure, part of the 50S ribosomal subunit.

Functionally, this protein binds to the 23S rRNA, and is important in its secondary structure. It is located near the subunit interface in the base of the L7/L12 stalk, and near the tRNA binding site of the peptidyltransferase center. This is Large ribosomal subunit protein uL6 from Thiobacillus denitrificans (strain ATCC 25259 / T1).